The chain runs to 461 residues: METLFNGTLALAGRDQETTGFAWWAGNARLINLSGKLLGAHVAHAGLIVFWAGAMNLFEVAHFVPEKPMYEQGLILLPHLATLGWGVGPGGEVIDTFPYFVSGVLHLISSAVLGFGGIYHALLGPETLEESFPFFGYVWKDRNKMTTILGIHLILLGLGAFLLVFKALYFGGVYDTWAPGGGDVRKITNLTLSPSIIFGYLLKSPFGGEGWIVSVDDLEDIIGGHVWLGSICILGGIWHILTKPFAWARRALVWSGEAYLSYSLGALSVFGFIACCFVWFNNTAYPSEFYGPTGPEASQAQAFTFLVRDQRLGANVGSAQGPTGLGKYLMRSPTGEVIFGGETMRFWDLRAPWLEPLRGPNGLDLSRLKKDIQPWQERRSAEYMTHAPLGSLNSVGGVATEINAVNYVSPRSWLATSHFVLGFFFFVGHLWHAGRARAAAAGFEKGIDRDFEPVLSMTPLN.

Positions 1-2 (ME) are excised as a propeptide. N-acetylthreonine is present on Thr-3. The residue at position 3 (Thr-3) is a Phosphothreonine. The next 5 helical transmembrane spans lie at 57-81 (LFEV…PHLA), 122-143 (LLGP…KDRN), 166-188 (KALY…RKIT), 243-263 (KPFA…LSYS), and 279-300 (WFNN…ASQA). [CaMn4O5] cluster is bound at residue Glu-355. A helical membrane pass occupies residues 435–459 (RARAAAAGFEKGIDRDFEPVLSMTP).

This sequence belongs to the PsbB/PsbC family. PsbC subfamily. In terms of assembly, PSII is composed of 1 copy each of membrane proteins PsbA, PsbB, PsbC, PsbD, PsbE, PsbF, PsbH, PsbI, PsbJ, PsbK, PsbL, PsbM, PsbT, PsbX, PsbY, PsbZ, Psb30/Ycf12, at least 3 peripheral proteins of the oxygen-evolving complex and a large number of cofactors. It forms dimeric complexes. It depends on Binds multiple chlorophylls and provides some of the ligands for the Ca-4Mn-5O cluster of the oxygen-evolving complex. It may also provide a ligand for a Cl- that is required for oxygen evolution. PSII binds additional chlorophylls, carotenoids and specific lipids. as a cofactor.

It localises to the plastid. Its subcellular location is the chloroplast thylakoid membrane. One of the components of the core complex of photosystem II (PSII). It binds chlorophyll and helps catalyze the primary light-induced photochemical processes of PSII. PSII is a light-driven water:plastoquinone oxidoreductase, using light energy to abstract electrons from H(2)O, generating O(2) and a proton gradient subsequently used for ATP formation. The chain is Photosystem II CP43 reaction center protein from Nicotiana sylvestris (Wood tobacco).